Reading from the N-terminus, the 223-residue chain is Receptor-transporting protein 2 (223 aa).

The Cytoplasmic segment spans residues 1–193; that stretch reads MSTSLTTCEW…KKGQAGFISS (193 aa). The 3CxxC-type zinc-finger motif lies at 52–161; that stretch reads ASGRFHCSWC…SEFCEACQEG (110 aa). The helical transmembrane segment at 194–216 threads the bilayer; sequence FFSFRWCLFWGTLCLVIVYLQFF. Residues 217–223 lie on the Extracellular side of the membrane; that stretch reads RGRSGFL.

This sequence belongs to the TMEM7 family. Interacts with olfactory receptors. In terms of tissue distribution, predominantly expressed in olfactory and vomeronasal organs, in mature olfactory sensory neurons.

The protein resides in the cell membrane. In terms of biological role, specifically promotes functional cell surface expression of olfactory receptors, but not of other GPCRs. The sequence is that of Receptor-transporting protein 2 (Rtp2) from Mus musculus (Mouse).